The chain runs to 334 residues: Beta-ketoacyl-[acyl-carrier-protein] synthase III (334 aa).

Catalysis depends on residues cysteine 114 and histidine 253. Residues 254–258 (QANIR) are ACP-binding. Residue asparagine 283 is part of the active site.

It belongs to the thiolase-like superfamily. FabH family. Homodimer.

The protein resides in the cytoplasm. The enzyme catalyses malonyl-[ACP] + acetyl-CoA + H(+) = 3-oxobutanoyl-[ACP] + CO2 + CoA. It functions in the pathway lipid metabolism; fatty acid biosynthesis. Its function is as follows. Catalyzes the condensation reaction of fatty acid synthesis by the addition to an acyl acceptor of two carbons from malonyl-ACP. Catalyzes the first condensation reaction which initiates fatty acid synthesis and may therefore play a role in governing the total rate of fatty acid production. Possesses both acetoacetyl-ACP synthase and acetyl transacylase activities. Its substrate specificity determines the biosynthesis of branched-chain and/or straight-chain of fatty acids. This Campylobacter curvus (strain 525.92) protein is Beta-ketoacyl-[acyl-carrier-protein] synthase III.